The chain runs to 874 residues: DNA mismatch repair protein MutS (874 aa).

613-620 (GPNMGGKS) is an ATP binding site. The disordered stretch occupies residues 799–820 (EAGSTPSPAPVSVNEPKPAAPT).

This sequence belongs to the DNA mismatch repair MutS family.

In terms of biological role, this protein is involved in the repair of mismatches in DNA. It is possible that it carries out the mismatch recognition step. This protein has a weak ATPase activity. This chain is DNA mismatch repair protein MutS, found in Marinobacter nauticus (strain ATCC 700491 / DSM 11845 / VT8) (Marinobacter aquaeolei).